The chain runs to 354 residues: MKIAILLSGGVDSSVALYTMIQKGYKNIKCYYLKIWLEDELSYIGECPWKEDITYVDSVCKKFNVPYKIINLQEEYYNRVVTYAIEELKMGNTPSPDIFCNQRIKFGAFFEKINEKYDLIVTGHYAKIENKNNSYTLKQAKDKIKDQSYFLSHLSKKQISKLHFPLGDLLKSEIRQIAHEIDLPNKNRKDSQGICFLGKIKYNEFIKYHLGELKGNIIEQETGKILGTHNGYWFFTIGQRKGIKLSHGPWFVTEKDIQNNIIYISNSTNYLKQGKEQFLVHKTNWINKPLKNNNLSAKIRHGEKKIKCKIETLKDEIIRVNLEEKDYGISPGQFCIFYKEDECLGGAKILKTLI.

Residues 6–13 and Leu33 each bind ATP; that span reads LLSGGVDS. The Nucleophile role is filled by Cys100. Cys100 and Cys195 are disulfide-bonded. Residue Gly123 participates in ATP binding. Residues 145–147 are interaction with tRNA; sequence KDQ. Residue Cys195 is the Cysteine persulfide intermediate of the active site.

The protein belongs to the MnmA/TRMU family.

The protein localises to the cytoplasm. It catalyses the reaction S-sulfanyl-L-cysteinyl-[protein] + uridine(34) in tRNA + AH2 + ATP = 2-thiouridine(34) in tRNA + L-cysteinyl-[protein] + A + AMP + diphosphate + H(+). Catalyzes the 2-thiolation of uridine at the wobble position (U34) of tRNA, leading to the formation of s(2)U34. The polypeptide is tRNA-specific 2-thiouridylase MnmA (Borrelia recurrentis (strain A1)).